The chain runs to 393 residues: uncharacterized protein (393 aa).

[4Fe-4S] cluster is bound by residues cysteine 72, cysteine 82, cysteine 85, and cysteine 160. Residues glutamine 215, phenylalanine 245, glutamate 267, and aspartate 313 each contribute to the S-adenosyl-L-methionine site. The active-site Nucleophile is the cysteine 340.

This sequence belongs to the class I-like SAM-binding methyltransferase superfamily. RNA M5U methyltransferase family.

This is an uncharacterized protein from Nitrosomonas europaea (strain ATCC 19718 / CIP 103999 / KCTC 2705 / NBRC 14298).